The following is a 253-amino-acid chain: Sulfate transporter CysZ (253 aa).

4 helical membrane-spanning segments follow: residues 31–51, 75–95, 151–171, and 222–242; these read FVIL…WWLF, LLWP…FSTI, IVLL…PVLW, and IPVL…AMWV.

Belongs to the CysZ family.

The protein localises to the cell inner membrane. Functionally, high affinity, high specificity proton-dependent sulfate transporter, which mediates sulfate uptake. Provides the sulfur source for the cysteine synthesis pathway. This Citrobacter koseri (strain ATCC BAA-895 / CDC 4225-83 / SGSC4696) protein is Sulfate transporter CysZ.